We begin with the raw amino-acid sequence, 528 residues long: Putative B3 domain-containing protein REM15 (528 aa).

2 consecutive DNA-binding regions (TF-B3) follow at residues 3 to 95 (HQHF…LGPS) and 135 to 231 (CFVA…LPNE). Positions 234–253 (EEANEVSLPEEPESDAERNL) are disordered. DNA-binding regions (TF-B3) lie at residues 279–376 (CFVA…IPNE) and 425–522 (QSSL…FCSK).

It localises to the nucleus. This Arabidopsis thaliana (Mouse-ear cress) protein is Putative B3 domain-containing protein REM15 (REM15.15).